Reading from the N-terminus, the 120-residue chain is NAD(P)H-quinone oxidoreductase subunit 3, chloroplastic (120 aa).

3 consecutive transmembrane segments (helical) span residues 7 to 27 (YDTFWIYLSISSLIPILAFSI), 64 to 84 (MFALVFVVFDVETVFLYPWAM), and 88 to 108 (ILGLFTFIEAFIFVIILIVGL).

This sequence belongs to the complex I subunit 3 family. As to quaternary structure, NDH is composed of at least 16 different subunits, 5 of which are encoded in the nucleus.

Its subcellular location is the plastid. The protein resides in the chloroplast thylakoid membrane. It catalyses the reaction a plastoquinone + NADH + (n+1) H(+)(in) = a plastoquinol + NAD(+) + n H(+)(out). The enzyme catalyses a plastoquinone + NADPH + (n+1) H(+)(in) = a plastoquinol + NADP(+) + n H(+)(out). Functionally, NDH shuttles electrons from NAD(P)H:plastoquinone, via FMN and iron-sulfur (Fe-S) centers, to quinones in the photosynthetic chain and possibly in a chloroplast respiratory chain. The immediate electron acceptor for the enzyme in this species is believed to be plastoquinone. Couples the redox reaction to proton translocation, and thus conserves the redox energy in a proton gradient. This is NAD(P)H-quinone oxidoreductase subunit 3, chloroplastic from Cryptomeria japonica (Japanese cedar).